The chain runs to 775 residues: Acetamidase regulatory protein (775 aa).

The span at 1–15 (MSSTAHNSQPSTGNG) shows a compositional bias: polar residues. The segment at 1 to 20 (MSSTAHNSQPSTGNGVTKRK) is disordered. The segment at residues 26 to 59 (CIHCHRRKVRCDARIVGLPCSNCRSAGKADCRIH) is a DNA-binding region (zn(2)-C6 fungal-type). Residues 126 to 153 (PHSSYTNGNHLSNNRGSQPITETQTFTR) are compositionally biased toward polar residues. Disordered regions lie at residues 126–159 (PHSS…GADR) and 630–699 (ATSE…HQNQ). The span at 630-644 (ATSERPRRFSTHDQN) shows a compositional bias: basic and acidic residues. The segment covering 674–689 (PRPPYEVPTPESPRMP) has biased composition (pro residues).

The protein resides in the nucleus. Its function is as follows. Positively regulates the expression of genes involved in the catabolism of certain amides, omega amino acids, and lactams. The protein is Acetamidase regulatory protein (amdR) of Aspergillus oryzae (strain ATCC 42149 / RIB 40) (Yellow koji mold).